A 504-amino-acid polypeptide reads, in one-letter code: Maturase K (504 aa).

It belongs to the intron maturase 2 family. MatK subfamily.

The protein resides in the plastid. The protein localises to the chloroplast. Its function is as follows. Usually encoded in the trnK tRNA gene intron. Probably assists in splicing its own and other chloroplast group II introns. The sequence is that of Maturase K from Gossypium gossypioides (Mexican cotton).